The chain runs to 454 residues: Capsid vertex component 1 (454 aa).

Residues 197-227 (TVRGESLDPPVSQKGPARTRHRPPPVRLSFN) form a disordered region.

It belongs to the herpesviridae CVC1 protein family. Interacts (via C-terminus) with capsid vertex component 2/CVC2.

The protein resides in the virion. The protein localises to the host nucleus. Capsid vertex-specific component that plays a role during viral DNA encapsidation, assuring correct genome cleavage and presumably stabilizing capsids that contain full-length viral genomes. The sequence is that of Capsid vertex component 1 from Human herpesvirus 8 type P (isolate GK18) (HHV-8).